We begin with the raw amino-acid sequence, 497 residues long: Transmembrane protein 200A (497 aa).

Topologically, residues 1–61 (MIATGGVITG…RGKIRLYSAS (61 aa)) are cytoplasmic. A compositionally biased stretch (polar residues) spans 20-30 (TRSQYHLSAQS). The segment at 20–44 (TRSQYHLSAQSPGPAPEKKTTKRKP) is disordered. Residues 62-82 (GFFLVLGVLILMAGIAMAVLG) traverse the membrane as a helical segment. Residues 83–127 (YWPHKDQPKAPETKMSANNTQSFGREQAGSIAQFLEQHMHSEKMK) are Extracellular-facing. Asparagine 100 carries an N-linked (GlcNAc...) asparagine glycan. A helical membrane pass occupies residues 128–148 (MLGPFTMGIGIFIFICANAIL). Topologically, residues 149–497 (HENRDRETKV…LKRGTSETRF (349 aa)) are cytoplasmic. Over residues 353–375 (SNSATESASSTSSRSSLSPGSTS) the composition is skewed to low complexity. 2 disordered regions span residues 353–385 (SNSA…GAAR) and 400–438 (HSKS…GYTR). Over residues 427 to 438 (RLDRSNSKGYTR) the composition is skewed to basic and acidic residues.

This sequence belongs to the TMEM200 family.

The protein localises to the membrane. The polypeptide is Transmembrane protein 200A (tmem200a) (Danio rerio (Zebrafish)).